The chain runs to 563 residues: Dicarboxylate transporter 2.1, chloroplastic (563 aa).

A chloroplast-targeting transit peptide spans 1-68 (MESFALHSLS…LKPIPRFSTR (68 aa)). Disordered regions lie at residues 16 to 45 (TLLSHHHHHHPSRLSLLRRTSSRSPPSTIS) and 71 to 92 (AAPQDNAPPPPPPSPSPSPSPQ). Residues 28–45 (RLSLLRRTSSRSPPSTIS) are compositionally biased toward low complexity. The span at 76-90 (NAPPPPPPSPSPSPS) shows a compositional bias: pro residues. The next 12 helical transmembrane spans lie at 96–116 (LIPLILSISVGLILRFAVPVP), 134–154 (IAGLVLSPLPVGAWAFIGLTA), 165–185 (AAFSAFTSEVIWLIVISFFFA), 234–254 (AGGIFLPIIKSLSLSAGSKPN), 261–281 (LGSYLIQSQFQCAGNSSALFL), 308–328 (WFKAASLPAIISLLCTPLILY), 358–378 (NEWIMVGTMLLAVTLWICGET), 379–399 (LGIPSVVAAMIGLSILLVLGV), 414–434 (TLAWFAVLVGMAGQLTNLGVV), 450–470 (LSWPAAFGLLQAAYFFIHYLF), 483–503 (AFLAMHIAAGVPGILAALALA), and 537–557 (IGFVMATINAIIWGVVGTFWW).

It belongs to the SLC13A/DASS transporter (TC 2.A.47) family. DIT1 subfamily. In terms of tissue distribution, expressed in roots, rosette and cauline leaves, stems, flowers and siliques.

The protein localises to the plastid. Its subcellular location is the chloroplast inner membrane. Glutamate/malate translocator involved with DIT1 in primary ammonia assimilation and in the re-assimilation of ammonia generated by the photorespiratory pathway. Exports the end product of ammonia assimilation, glutamate, from plastids to the cytosol. The precursor for ammonia assimilation, 2-oxoglutarate, is imported from the cytosol by DIT1. The protein is Dicarboxylate transporter 2.1, chloroplastic (DIT2-1) of Arabidopsis thaliana (Mouse-ear cress).